A 696-amino-acid polypeptide reads, in one-letter code: Elongation factor G (696 aa).

In terms of domain architecture, tr-type G spans 8 to 282; it reads DRTRNIGIMA…AVIDYLPSPL (275 aa). GTP contacts are provided by residues 17–24, 81–85, and 135–138; these read AHIDAGKT, DTPGH, and NKMD.

It belongs to the TRAFAC class translation factor GTPase superfamily. Classic translation factor GTPase family. EF-G/EF-2 subfamily.

The protein resides in the cytoplasm. Functionally, catalyzes the GTP-dependent ribosomal translocation step during translation elongation. During this step, the ribosome changes from the pre-translocational (PRE) to the post-translocational (POST) state as the newly formed A-site-bound peptidyl-tRNA and P-site-bound deacylated tRNA move to the P and E sites, respectively. Catalyzes the coordinated movement of the two tRNA molecules, the mRNA and conformational changes in the ribosome. The protein is Elongation factor G of Staphylococcus saprophyticus subsp. saprophyticus (strain ATCC 15305 / DSM 20229 / NCIMB 8711 / NCTC 7292 / S-41).